The following is a 286-amino-acid chain: 4-hydroxy-tetrahydrodipicolinate synthase 2 (286 aa).

Thr-45 serves as a coordination point for pyruvate. Catalysis depends on Tyr-133, which acts as the Proton donor/acceptor. Lys-161 (schiff-base intermediate with substrate) is an active-site residue. A pyruvate-binding site is contributed by Ile-203.

It belongs to the DapA family. In terms of assembly, homotetramer; dimer of dimers.

The protein localises to the cytoplasm. The catalysed reaction is L-aspartate 4-semialdehyde + pyruvate = (2S,4S)-4-hydroxy-2,3,4,5-tetrahydrodipicolinate + H2O + H(+). Its pathway is amino-acid biosynthesis; L-lysine biosynthesis via DAP pathway; (S)-tetrahydrodipicolinate from L-aspartate: step 3/4. Catalyzes the condensation of (S)-aspartate-beta-semialdehyde [(S)-ASA] and pyruvate to 4-hydroxy-tetrahydrodipicolinate (HTPA). This is 4-hydroxy-tetrahydrodipicolinate synthase 2 from Clostridium acetobutylicum (strain ATCC 824 / DSM 792 / JCM 1419 / IAM 19013 / LMG 5710 / NBRC 13948 / NRRL B-527 / VKM B-1787 / 2291 / W).